Here is a 506-residue protein sequence, read N- to C-terminus: NADH-quinone oxidoreductase subunit N (506 aa).

14 helical membrane-spanning segments follow: residues 14-34 (MVPEFIILGAAILLSICDLFF), 40-60 (YVALGAIAAVVLAIVSLITLY), 72-92 (FVLDGFSKGFKTLLLGGAALI), 109-129 (GEYYYLFLMALLGAMFMASSV), 131-151 (FVTLFVGLELLSLSSYILVGI), 166-186 (VINGGIGTAITLFGMSYLYGI), 209-229 (LLLALAFLLLLVGLSFKIATV), 256-276 (MAGFLLIIRLFLMVFASVSVQ), 286-306 (MSIYIAVLASITMIIGNVVAL), 314-334 (LFAYSGIAHAGYLLVPLVALS), 343-363 (FYMLAYMLMNIGAFAIIHGLI), 385-405 (AIVMTIFILSLAGIPGTAGFI), 420-440 (AHYVLASIMMGTTVISFVYYF), and 465-485 (IVMSFCAISIVILGIVPMIGY).

This sequence belongs to the complex I subunit 2 family. As to quaternary structure, NDH-1 is composed of 14 different subunits. Subunits NuoA, H, J, K, L, M, N constitute the membrane sector of the complex.

It localises to the cell membrane. It carries out the reaction a quinone + NADH + 5 H(+)(in) = a quinol + NAD(+) + 4 H(+)(out). Functionally, NDH-1 shuttles electrons from NADH, via FMN and iron-sulfur (Fe-S) centers, to quinones in the respiratory chain. The immediate electron acceptor for the enzyme in this species is believed to be a menaquinone. Couples the redox reaction to proton translocation (for every two electrons transferred, four hydrogen ions are translocated across the cytoplasmic membrane), and thus conserves the redox energy in a proton gradient. This is NADH-quinone oxidoreductase subunit N from Bacillus anthracis.